The following is a 318-amino-acid chain: Ribosomal RNA small subunit methyltransferase H (318 aa).

Residues 34–36 (GGH), Asp-57, Leu-91, Asp-110, and Gln-117 contribute to the S-adenosyl-L-methionine site.

This sequence belongs to the methyltransferase superfamily. RsmH family.

The protein resides in the cytoplasm. The enzyme catalyses cytidine(1402) in 16S rRNA + S-adenosyl-L-methionine = N(4)-methylcytidine(1402) in 16S rRNA + S-adenosyl-L-homocysteine + H(+). In terms of biological role, specifically methylates the N4 position of cytidine in position 1402 (C1402) of 16S rRNA. This Chlorobaculum parvum (strain DSM 263 / NCIMB 8327) (Chlorobium vibrioforme subsp. thiosulfatophilum) protein is Ribosomal RNA small subunit methyltransferase H.